The chain runs to 197 residues: Probable chorismate pyruvate-lyase (197 aa).

The span at 1-14 shows a compositional bias: basic and acidic residues; it reads MRFDAADAHWRETP. Positions 1 to 25 are disordered; sequence MRFDAADAHWRETPRPGASGAQKDW. Residues Arg73, Leu111, and Glu173 each contribute to the substrate site.

The protein belongs to the UbiC family.

The protein localises to the cytoplasm. The enzyme catalyses chorismate = 4-hydroxybenzoate + pyruvate. The protein operates within cofactor biosynthesis; ubiquinone biosynthesis. Its function is as follows. Removes the pyruvyl group from chorismate, with concomitant aromatization of the ring, to provide 4-hydroxybenzoate (4HB) for the ubiquinone pathway. The sequence is that of Probable chorismate pyruvate-lyase from Burkholderia thailandensis (strain ATCC 700388 / DSM 13276 / CCUG 48851 / CIP 106301 / E264).